Consider the following 612-residue polypeptide: Elongation factor 4 (612 aa).

Residues 11–193 form the tr-type G domain; sequence KHIRNFSIVA…RIVTDISAPT (183 aa). Residues 23-28 and 140-143 each bind GTP; these read DHGKST and NKID.

This sequence belongs to the TRAFAC class translation factor GTPase superfamily. Classic translation factor GTPase family. LepA subfamily.

Its subcellular location is the cell membrane. The catalysed reaction is GTP + H2O = GDP + phosphate + H(+). Required for accurate and efficient protein synthesis under certain stress conditions. May act as a fidelity factor of the translation reaction, by catalyzing a one-codon backward translocation of tRNAs on improperly translocated ribosomes. Back-translocation proceeds from a post-translocation (POST) complex to a pre-translocation (PRE) complex, thus giving elongation factor G a second chance to translocate the tRNAs correctly. Binds to ribosomes in a GTP-dependent manner. The sequence is that of Elongation factor 4 from Lactobacillus delbrueckii subsp. bulgaricus (strain ATCC 11842 / DSM 20081 / BCRC 10696 / JCM 1002 / NBRC 13953 / NCIMB 11778 / NCTC 12712 / WDCM 00102 / Lb 14).